The following is a 139-amino-acid chain: Large ribosomal subunit protein uL16 (139 aa).

This sequence belongs to the universal ribosomal protein uL16 family. Part of the 50S ribosomal subunit.

Functionally, binds 23S rRNA and is also seen to make contacts with the A and possibly P site tRNAs. This is Large ribosomal subunit protein uL16 from Crocosphaera subtropica (strain ATCC 51142 / BH68) (Cyanothece sp. (strain ATCC 51142)).